The primary structure comprises 212 residues: Ion-translocating oxidoreductase complex subunit G (212 aa).

Residues 9–29 traverse the membrane as a helical segment; sequence ASLLGLFALLCTALVALVNQF. Thr-176 bears the FMN phosphoryl threonine mark.

This sequence belongs to the RnfG family. The complex is composed of six subunits: RnfA, RnfB, RnfC, RnfD, RnfE and RnfG. FMN serves as cofactor.

The protein localises to the cell inner membrane. Part of a membrane-bound complex that couples electron transfer with translocation of ions across the membrane. The polypeptide is Ion-translocating oxidoreductase complex subunit G (Shewanella loihica (strain ATCC BAA-1088 / PV-4)).